Here is a 174-residue protein sequence, read N- to C-terminus: Small ribosomal subunit protein uS5 (174 aa).

The S5 DRBM domain maps to I20–V83.

It belongs to the universal ribosomal protein uS5 family. As to quaternary structure, part of the 30S ribosomal subunit. Contacts proteins S4 and S8.

With S4 and S12 plays an important role in translational accuracy. Functionally, located at the back of the 30S subunit body where it stabilizes the conformation of the head with respect to the body. The protein is Small ribosomal subunit protein uS5 of Lactobacillus gasseri (strain ATCC 33323 / DSM 20243 / BCRC 14619 / CIP 102991 / JCM 1131 / KCTC 3163 / NCIMB 11718 / NCTC 13722 / AM63).